Consider the following 209-residue polypeptide: Uracil phosphoribosyltransferase (209 aa).

5-phospho-alpha-D-ribose 1-diphosphate contacts are provided by residues Arg-79, Arg-104, and 131-139 (DPMLATANS). Uracil is bound by residues Ile-194 and 199-201 (GDA). Residue Asp-200 coordinates 5-phospho-alpha-D-ribose 1-diphosphate.

Belongs to the UPRTase family. Mg(2+) is required as a cofactor.

It catalyses the reaction UMP + diphosphate = 5-phospho-alpha-D-ribose 1-diphosphate + uracil. Its pathway is pyrimidine metabolism; UMP biosynthesis via salvage pathway; UMP from uracil: step 1/1. With respect to regulation, allosterically activated by GTP. Catalyzes the conversion of uracil and 5-phospho-alpha-D-ribose 1-diphosphate (PRPP) to UMP and diphosphate. The sequence is that of Uracil phosphoribosyltransferase from Mesorhizobium japonicum (strain LMG 29417 / CECT 9101 / MAFF 303099) (Mesorhizobium loti (strain MAFF 303099)).